The sequence spans 128 residues: Protein ApaG (128 aa).

Residues 1–123 (MTSSPDITVS…FRLDIAPESG (123 aa)) form the ApaG domain.

The chain is Protein ApaG from Deinococcus radiodurans (strain ATCC 13939 / DSM 20539 / JCM 16871 / CCUG 27074 / LMG 4051 / NBRC 15346 / NCIMB 9279 / VKM B-1422 / R1).